The sequence spans 356 residues: Putative mitogen-activated protein kinase 14C (356 aa).

The Protein kinase domain maps to 20 to 305 (YEFVRFLGGG…AAEAMLHPYL (286 aa)). ATP contacts are provided by residues 26–34 (LGGGSFGQV) and K49. The active-site Proton acceptor is D147. The residue at position 177 (T177) is a Phosphothreonine.

Belongs to the protein kinase superfamily. CMGC Ser/Thr protein kinase family. MAP kinase subfamily. Requires Mg(2+) as cofactor. The phosphorylation on Thr-177 activates the enzyme. A conserved Tyr, which must also be phosphorylated to activate the enzyme in closely related sequences, is replaced by His-179 in this sequence.

It carries out the reaction L-seryl-[protein] + ATP = O-phospho-L-seryl-[protein] + ADP + H(+). The enzyme catalyses L-threonyl-[protein] + ATP = O-phospho-L-threonyl-[protein] + ADP + H(+). Its function is as follows. Kinase involved in a signal transduction pathway. The sequence is that of Putative mitogen-activated protein kinase 14C (p38c) from Drosophila melanogaster (Fruit fly).